The following is a 468-amino-acid chain: Alpha-2A adrenergic receptor (468 aa).

Residues M1–T48 lie on the Extracellular side of the membrane. N-linked (GlcNAc...) asparagine glycans are attached at residues N25 and N29. The chain crosses the membrane as a helical span at residues L49–F74. Residues T75–L85 are Cytoplasmic-facing. Residues F86–M111 traverse the membrane as a helical segment. Over G112–C121 the chain is Extracellular. C121 and C203 are disulfide-bonded. A helical transmembrane segment spans residues E122 to L144. At D145–R164 the chain is on the cytoplasmic side. The chain crosses the membrane as a helical span at residues I165–E188. Over K189 to D207 the chain is Extracellular. A helical membrane pass occupies residues Q208–V232. Over R233–F392 the chain is Cytoplasmic. 2 disordered regions span residues T242–V279 and N291–R381. Over residues S315 to P332 the composition is skewed to basic and acidic residues. S348 bears the Phosphoserine mark. Residues R351–P366 are compositionally biased toward low complexity. Omega-N-methylarginine is present on R370. The chain crosses the membrane as a helical span at residues V393–I417. Over G418 to K427 the chain is Extracellular. Residues F428–N448 traverse the membrane as a helical segment. At H449 to V468 the chain is on the cytoplasmic side. C460 carries S-palmitoyl cysteine lipidation.

This sequence belongs to the G-protein coupled receptor 1 family. Adrenergic receptor subfamily. ADRA2A sub-subfamily. In terms of assembly, component of the ADA2A-containing complex (ATAC), composed of KAT14, KAT2A, TADA2L, TADA3L, ZZ3, MBIP, WDR5, YEATS2, CCDC101 and DR1. As to expression, retina, brain and olfactory lobe.

It localises to the cell membrane. In terms of biological role, alpha-2 adrenergic receptors mediate the catecholamine-induced inhibition of adenylate cyclase through the action of G proteins. Component of the ATAC complex, a complex with histone acetyltransferase activity on histones H3 and H4. The sequence is that of Alpha-2A adrenergic receptor from Bos taurus (Bovine).